The sequence spans 179 residues: Translation initiation factor IF-3 (179 aa).

Belongs to the IF-3 family. In terms of assembly, monomer.

It is found in the cytoplasm. IF-3 binds to the 30S ribosomal subunit and shifts the equilibrium between 70S ribosomes and their 50S and 30S subunits in favor of the free subunits, thus enhancing the availability of 30S subunits on which protein synthesis initiation begins. This chain is Translation initiation factor IF-3, found in Buchnera aphidicola subsp. Acyrthosiphon pisum (strain APS) (Acyrthosiphon pisum symbiotic bacterium).